The following is a 454-amino-acid chain: Bifunctional protein GlmU (454 aa).

The segment at 1-226 (MSTTVIILAA…AFEVEGVNDR (226 aa)) is pyrophosphorylase. Residues 8–11 (LAAG), Lys22, Gln73, 78–79 (GT), 100–102 (YGD), Gly137, Glu151, Asn166, and Asn224 each bind UDP-N-acetyl-alpha-D-glucosamine. Residue Asp102 participates in Mg(2+) binding. Asn224 serves as a coordination point for Mg(2+). The interval 227-247 (LQLAALEREFQKQQAKELMQQ) is linker. Positions 248 to 454 (GVTFADPARF…NYQRPQKLKK (207 aa)) are N-acetyltransferase. UDP-N-acetyl-alpha-D-glucosamine-binding residues include Arg330 and Lys348. His360 acts as the Proton acceptor in catalysis. Residues Tyr363 and Asn374 each contribute to the UDP-N-acetyl-alpha-D-glucosamine site. Acetyl-CoA-binding positions include Ala377, 383 to 384 (NY), Ser402, Ala420, and Arg437.

The protein in the N-terminal section; belongs to the N-acetylglucosamine-1-phosphate uridyltransferase family. In the C-terminal section; belongs to the transferase hexapeptide repeat family. Homotrimer. Mg(2+) is required as a cofactor.

The protein localises to the cytoplasm. The catalysed reaction is alpha-D-glucosamine 1-phosphate + acetyl-CoA = N-acetyl-alpha-D-glucosamine 1-phosphate + CoA + H(+). It carries out the reaction N-acetyl-alpha-D-glucosamine 1-phosphate + UTP + H(+) = UDP-N-acetyl-alpha-D-glucosamine + diphosphate. It participates in nucleotide-sugar biosynthesis; UDP-N-acetyl-alpha-D-glucosamine biosynthesis; N-acetyl-alpha-D-glucosamine 1-phosphate from alpha-D-glucosamine 6-phosphate (route II): step 2/2. The protein operates within nucleotide-sugar biosynthesis; UDP-N-acetyl-alpha-D-glucosamine biosynthesis; UDP-N-acetyl-alpha-D-glucosamine from N-acetyl-alpha-D-glucosamine 1-phosphate: step 1/1. It functions in the pathway bacterial outer membrane biogenesis; LPS lipid A biosynthesis. Catalyzes the last two sequential reactions in the de novo biosynthetic pathway for UDP-N-acetylglucosamine (UDP-GlcNAc). The C-terminal domain catalyzes the transfer of acetyl group from acetyl coenzyme A to glucosamine-1-phosphate (GlcN-1-P) to produce N-acetylglucosamine-1-phosphate (GlcNAc-1-P), which is converted into UDP-GlcNAc by the transfer of uridine 5-monophosphate (from uridine 5-triphosphate), a reaction catalyzed by the N-terminal domain. The polypeptide is Bifunctional protein GlmU (Acinetobacter baumannii (strain ACICU)).